The chain runs to 491 residues: E3 ubiquitin-protein ligase Hakai (491 aa).

2 disordered regions span residues 1 to 20 (MDHT…LGGL) and 33 to 61 (KQAS…GDEE). The segment at 109-149 (CDKCGLPIKVYGRMIPCKHVFCYDCAILHEKKGDKMCPGCS) adopts an RING-type zinc-finger fold. An HYB domain region spans residues 148–206 (CSDPVQRIEQCTRGSLFMCSIVQGCKRTYLSQRDLQAHINHRHMRAGKPVTRASLENVH). A C2H2-type zinc finger spans residues 164-190 (FMCSIVQGCKRTYLSQRDLQAHINHRH). A phosphoserine mark is found at Ser-201, Ser-285, and Ser-290. A disordered region spans residues 255-491 (QPHEDIRAPP…DQTRYRPYYQ (237 aa)). Pro residues-rich tracts occupy residues 342–359 (APPP…PHPP), 372–389 (APPP…PPPG), and 399–423 (MNHP…PPHH). Residues 427 to 442 (NSLPQFTEDQGTLSPP) show a composition bias toward polar residues. Pro residues predominate over residues 457–478 (PRGPPPPPRMQGPPSQTPLPGP).

This sequence belongs to the Hakai family. As to quaternary structure, homodimer. Interacts with tyrosine-phosphorylated SRC substrates. Component of the WMM complex, a N6-methyltransferase complex composed of a catalytic subcomplex, named MAC, and of an associated subcomplex, named MACOM. The MAC subcomplex is composed of METTL3 and METTL14. The MACOM subcomplex is composed of WTAP, ZC3H13, CBLL1/HAKAI, VIRMA, and, in some cases of RBM15 (RBM15 or RBM15B). Also a component of a MACOM-like complex, named WTAP complex, composed of WTAP, ZC3H13, CBLL1, VIRMA, RBM15, BCLAF1 and THRAP3. Phosphorylated on tyrosine residues. Detected in heart, brain, spleen, lung, liver, skeletal muscle, kidney and testis.

It is found in the nucleus speckle. Its subcellular location is the nucleus. The protein localises to the nucleoplasm. The protein resides in the cytoplasm. It carries out the reaction S-ubiquitinyl-[E2 ubiquitin-conjugating enzyme]-L-cysteine + [acceptor protein]-L-lysine = [E2 ubiquitin-conjugating enzyme]-L-cysteine + N(6)-ubiquitinyl-[acceptor protein]-L-lysine.. It functions in the pathway protein modification; protein ubiquitination. Its function is as follows. E3 ubiquitin-protein ligase that mediates ubiquitination of several tyrosine-phosphorylated Src substrates, including CDH1, CTTN and DOK1. Targets CDH1 for endocytosis and degradation. Associated component of the WMM complex, a complex that mediates N6-methyladenosine (m6A) methylation of RNAs, a modification that plays a role in the efficiency of mRNA splicing and RNA processing. Its function in the WMM complex is unknown. In Mus musculus (Mouse), this protein is E3 ubiquitin-protein ligase Hakai.